Consider the following 618-residue polypeptide: uncharacterized protein (618 aa).

The N-terminal stretch at 1–29 (MSFLVLPPEVNSALMFAGAGSGPTLAAAA) is a signal peptide. Positions 598–618 (SGDNSSGGFNAGNDQSGFFDG) are disordered.

This sequence belongs to the mycobacterial PPE family.

This is an uncharacterized protein from Mycobacterium tuberculosis (strain ATCC 25618 / H37Rv).